The primary structure comprises 91 residues: Small ribosomal subunit protein bS20 (91 aa).

It belongs to the bacterial ribosomal protein bS20 family.

Binds directly to 16S ribosomal RNA. The polypeptide is Small ribosomal subunit protein bS20 (Wolinella succinogenes (strain ATCC 29543 / DSM 1740 / CCUG 13145 / JCM 31913 / LMG 7466 / NCTC 11488 / FDC 602W) (Vibrio succinogenes)).